The sequence spans 199 residues: N-(5'-phosphoribosyl)anthranilate isomerase (199 aa).

The protein belongs to the TrpF family.

The catalysed reaction is N-(5-phospho-beta-D-ribosyl)anthranilate = 1-(2-carboxyphenylamino)-1-deoxy-D-ribulose 5-phosphate. It participates in amino-acid biosynthesis; L-tryptophan biosynthesis; L-tryptophan from chorismate: step 3/5. The polypeptide is N-(5'-phosphoribosyl)anthranilate isomerase (Streptococcus pneumoniae serotype 4 (strain ATCC BAA-334 / TIGR4)).